The sequence spans 727 residues: Elongation factor 2 (727 aa).

The tr-type G domain occupies 19 to 260 (EQIRNMGICA…MSIKHLPNPL (242 aa)). GTP contacts are provided by residues 28–35 (AHIDHGKT), 94–98 (DTPGH), and 148–151 (NKVD). The residue at position 603 (His-603) is a Diphthamide.

Belongs to the TRAFAC class translation factor GTPase superfamily. Classic translation factor GTPase family. EF-G/EF-2 subfamily.

Its subcellular location is the cytoplasm. In terms of biological role, catalyzes the GTP-dependent ribosomal translocation step during translation elongation. During this step, the ribosome changes from the pre-translocational (PRE) to the post-translocational (POST) state as the newly formed A-site-bound peptidyl-tRNA and P-site-bound deacylated tRNA move to the P and E sites, respectively. Catalyzes the coordinated movement of the two tRNA molecules, the mRNA and conformational changes in the ribosome. The polypeptide is Elongation factor 2 (Methanococcus maripaludis (strain DSM 14266 / JCM 13030 / NBRC 101832 / S2 / LL)).